A 67-amino-acid polypeptide reads, in one-letter code: Large ribosomal subunit protein eL24 (67 aa).

Zn(2+)-binding residues include Cys7, Cys10, Cys33, and Cys37. A C4-type zinc finger spans residues Cys7–Cys37. A compositionally biased stretch (basic and acidic residues) spans Arg48–Ala60. Residues Arg48–Ala67 are disordered.

This sequence belongs to the eukaryotic ribosomal protein eL24 family. Part of the 50S ribosomal subunit. Forms a cluster with proteins L3 and L14. Zn(2+) is required as a cofactor.

In terms of biological role, binds to the 23S rRNA. In Haloarcula marismortui (strain ATCC 43049 / DSM 3752 / JCM 8966 / VKM B-1809) (Halobacterium marismortui), this protein is Large ribosomal subunit protein eL24 (rpl24e).